We begin with the raw amino-acid sequence, 378 residues long: Cytochrome b (378 aa).

Helical transmembrane passes span 34–54, 78–99, 114–134, and 179–199; these read FGSL…FLAM, WLLR…YLHV, WLIG…GYVL, and FFTF…IHLL. Heme b is bound by residues H84 and H98. Heme b contacts are provided by H183 and H197. H202 lines the a ubiquinone pocket. The next 4 helical transmembrane spans lie at 227–247, 289–309, 321–341, and 348–368; these read FKDI…VLIS, LGGV…PFYN, INQV…WIGA, and YVLI…VNPL.

This sequence belongs to the cytochrome b family. As to quaternary structure, the main subunits of complex b-c1 are: cytochrome b, cytochrome c1 and the Rieske protein. The cofactor is heme b.

The protein resides in the mitochondrion inner membrane. In terms of biological role, component of the ubiquinol-cytochrome c reductase complex (complex III or cytochrome b-c1 complex) that is part of the mitochondrial respiratory chain. The b-c1 complex mediates electron transfer from ubiquinol to cytochrome c. Contributes to the generation of a proton gradient across the mitochondrial membrane that is then used for ATP synthesis. This Drosophila mauritiana (Fruit fly) protein is Cytochrome b (mt:Cyt-b).